A 437-amino-acid chain; its full sequence is Adenylosuccinate synthetase, organellar chromatophore (437 aa).

Residues 12–18 and 40–42 contribute to the GTP site; these read GDEGKGK and GHT. The Proton acceptor role is filled by D13. D13 and G40 together coordinate Mg(2+). IMP is bound by residues 13–16, 38–41, T128, R142, Q223, T238, and R302; these read DEGK and NAGH. Residue H41 is the Proton donor of the active site. 298–304 is a substrate binding site; the sequence is TTTGRRR. GTP is bound by residues R304 and 330 to 332; that span reads KLD.

The protein belongs to the adenylosuccinate synthetase family. Homodimer. Mg(2+) serves as cofactor.

The protein localises to the plastid. It localises to the organellar chromatophore. The enzyme catalyses IMP + L-aspartate + GTP = N(6)-(1,2-dicarboxyethyl)-AMP + GDP + phosphate + 2 H(+). The protein operates within purine metabolism; AMP biosynthesis via de novo pathway; AMP from IMP: step 1/2. In terms of biological role, plays an important role in the de novo pathway and in the salvage pathway of purine nucleotide biosynthesis. Catalyzes the first committed step in the biosynthesis of AMP from IMP. In Paulinella chromatophora, this protein is Adenylosuccinate synthetase, organellar chromatophore.